The chain runs to 440 residues: Long-chain alkane monooxygenase (440 aa).

Residues Asp58, 137 to 138 (SH), Tyr158, and 227 to 230 (AGMS) each bind FMN.

Belongs to the NtaA/SnaA/DszA monooxygenase family. In terms of assembly, homodimer.

Its subcellular location is the secreted. The catalysed reaction is a long-chain alkane + FMNH2 + O2 = a long chain fatty alcohol + FMN + H2O + H(+). Its function is as follows. Involved in the degradation of long-chain alkanes. Converts alkanes ranging from C(15) to C(36) into their corresponding primary alcohols. The sequence is that of Long-chain alkane monooxygenase from Geobacillus thermodenitrificans (strain NG80-2).